Here is a 457-residue protein sequence, read N- to C-terminus: Probable xyloglucan 6-xylosyltransferase 5 (457 aa).

A disordered region spans residues 1-40; it reads MGQDGSPAHKRPSGSGGGLPTTTLTNGGGRGGRGGLLPRG. The Cytoplasmic segment spans residues 1–51; sequence MGQDGSPAHKRPSGSGGGLPTTTLTNGGGRGGRGGLLPRGRQMQKTFNNIK. Residues 26–37 are compositionally biased toward gly residues; sequence NGGGRGGRGGLL. Residues 52-72 form a helical; Signal-anchor for type II membrane protein membrane-spanning segment; sequence ITILCGFVTILVLRGTIGVGN. The Lumenal segment spans residues 73–457; the sequence is LGSSSADAVN…RTPVETKPQN (385 aa). Positions 97–116 are disordered; it reads RSDSDPTDLDEPQEGDMNPN. Residues 101–110 show a composition bias toward acidic residues; the sequence is DPTDLDEPQE. N-linked (GlcNAc...) asparagine glycosylation is found at Asn116 and Asn432.

The protein belongs to the glycosyltransferase 34 family. In terms of assembly, interacts with XXT2 and CSLC4. Interacts with FUT1 and XLT2. Highly expressed in roots, stems and cauline leaves, and at lower levels in rosette leaves, flowers and siliques.

It localises to the golgi apparatus membrane. It catalyses the reaction Transfers an alpha-D-xylosyl residue from UDP-D-xylose to a glucose residue in xyloglucan, forming an alpha-(1-&gt;6)-D-xylosyl-D-glucose linkage.. Probable xyloglucan xylosyltransferase involved in the biosynthesis of xyloglucan in roots. May act in association with XXT1 and XXT2. Associates with other xyloglucan-synthesizing enzymes to form multiprotein complexes for xyloglucan synthesis in the Golgi. This Arabidopsis thaliana (Mouse-ear cress) protein is Probable xyloglucan 6-xylosyltransferase 5.